Reading from the N-terminus, the 96-residue chain is Small ribosomal subunit protein bS20 (96 aa).

This sequence belongs to the bacterial ribosomal protein bS20 family.

Binds directly to 16S ribosomal RNA. This Anaplasma marginale (strain St. Maries) protein is Small ribosomal subunit protein bS20.